A 113-amino-acid polypeptide reads, in one-letter code: Large ribosomal subunit protein bL19 (113 aa).

The protein belongs to the bacterial ribosomal protein bL19 family.

This protein is located at the 30S-50S ribosomal subunit interface and may play a role in the structure and function of the aminoacyl-tRNA binding site. The sequence is that of Large ribosomal subunit protein bL19 from Mycolicibacterium smegmatis (strain ATCC 700084 / mc(2)155) (Mycobacterium smegmatis).